Reading from the N-terminus, the 383-residue chain is Insecticidal crystal protein Cry35Ab1 (383 aa).

The Ricin B-type lectin domain maps to Asp26 to Thr138.

The protein belongs to the toxin_10 family. As to quaternary structure, monomer in solution. Copurifies from parasporal inclusion bodies with Cry34Ab1. Proteolytic processing occurs near the C-terminus yielding a stable protein of approximately 40 kDa; this may be the active form of the protein.

In terms of biological role, component of a binary insecticidal toxin active on western corn rootworm (WCR, Diabrotica virgifera subsp. virgifera Le Conte) and probably also on northern corn rootworm (D.barberi). Both proteins are required for maximal toxicity. The larval midgut epithelium is probably the primary target. This protein alone has no activity against southern corn rootworm (Diabrotica undecimpunctata howardi Barber), but it synergizes the toxic effect of its Cry34Ab1 partner. The 2 proteins individually and together form ion channels; channels made in the presence of the 2 proteins have higher conductance. Binds to WCR third instar midgut brush border membrane vesicles; binding improves over 10-fold in the presence of Cry34Ab1. This Bacillus thuringiensis protein is Insecticidal crystal protein Cry35Ab1.